The sequence spans 141 residues: Large ribosomal subunit protein uL11 (141 aa).

This sequence belongs to the universal ribosomal protein uL11 family. As to quaternary structure, part of the ribosomal stalk of the 50S ribosomal subunit. Interacts with L10 and the large rRNA to form the base of the stalk. L10 forms an elongated spine to which L12 dimers bind in a sequential fashion forming a multimeric L10(L12)X complex. In terms of processing, one or more lysine residues are methylated.

Its function is as follows. Forms part of the ribosomal stalk which helps the ribosome interact with GTP-bound translation factors. The polypeptide is Large ribosomal subunit protein uL11 (Exiguobacterium sibiricum (strain DSM 17290 / CCUG 55495 / CIP 109462 / JCM 13490 / 255-15)).